The primary structure comprises 688 residues: MADQLSSGMGNLSIDQQPPSGPQMGGQGQMRRSYIPPHLRGKMGDAAPPMAGPNGLNNSAWAGNNNYDARGPGGGGNWPAPGGPPGPGFEGQQGAGWGGPRPQGGFNPNAYRGNAGAGAGAGAGGGGGSFSNRGSGDGQWRDGKHIPGPANPRVERELFGTPDDPSKQHTGINFEKYDDIPVEASGDNVPEPVLTFSNPPLDNHLISNIQLARYNVPTPVQKYSIPIVMGGRDLMACAQTGSGKTGGFLFPILSQSFHTGPSPIPASAAGAYGRQRKAYPTALILAPTRELVSQIYDEARKFAYRSWVRPCVVYGGADIGSQLRQIERGCDLLVATPGRLVDLIERGRISLCNIKYLVLDEADRMLDMGFEPQIRRIVEGEDMPKVNDRQTLMFSATFPRDIQILARDFLKDYIFLSVGRVGSTSENITQKVEYVEDIDKRSVLLDILHTHAGGLTLIFVETKRMADSLSDFLINQNFPATSIHGDRTQRERERALEMFRNGRCPILVATAVAARGLDIPNVTHVINYDLPTDIDDYVHRIGRTGRAGNTGIATAFFNRGNRGVVRELLELLKEANQEVPAFLETIARESSFGGGRGGRGGGRGGGRGRTQTADYRKFGGSGGGGFGGGFGGAPASGGYGGGGYGGGGPPAGGYGGGGGAGYGGGGGGGGYGGGGYGNPGGAGGQSWW.

Composition is skewed to polar residues over residues 1 to 15 (MADQ…LSID) and 55 to 67 (GLNN…NNNY). The tract at residues 1–170 (MADQLSSGMG…TPDDPSKQHT (170 aa)) is disordered. The segment covering 88-102 (GFEGQQGAGWGGPRP) has biased composition (gly residues). The segment covering 103–114 (QGGFNPNAYRGN) has biased composition (low complexity). Residues 115-129 (AGAGAGAGAGGGGGS) show a composition bias toward gly residues. The short motif at 194–222 (LTFSNPPLDNHLISNIQLARYNVPTPVQK) is the Q motif element. The Helicase ATP-binding domain maps to 225-416 (IPIVMGGRDL…RDFLKDYIFL (192 aa)). Position 238–245 (238–245 (AQTGSGKT)) interacts with ATP. The DEAD box signature appears at 360–363 (DEAD). Residues 427-587 (NITQKVEYVE…EVPAFLETIA (161 aa)) enclose the Helicase C-terminal domain. Positions 590-615 (SSFGGGRGGRGGGRGGGRGRTQTADY) are disordered. Gly residues predominate over residues 592 to 608 (FGGGRGGRGGGRGGGRG).

It belongs to the DEAD box helicase family. DDX3/DED1 subfamily.

It localises to the cytoplasm. It catalyses the reaction ATP + H2O = ADP + phosphate + H(+). Its function is as follows. ATP-binding RNA helicase involved in translation initiation. Remodels RNA in response to ADP and ATP concentrations by facilitating disruption, but also formation of RNA duplexes. This Neurospora crassa (strain ATCC 24698 / 74-OR23-1A / CBS 708.71 / DSM 1257 / FGSC 987) protein is ATP-dependent RNA helicase ded1 (drh-9).